The sequence spans 144 residues: Large ribosomal subunit protein uL13 (144 aa).

This sequence belongs to the universal ribosomal protein uL13 family. As to quaternary structure, part of the 50S ribosomal subunit.

Its function is as follows. This protein is one of the early assembly proteins of the 50S ribosomal subunit, although it is not seen to bind rRNA by itself. It is important during the early stages of 50S assembly. This chain is Large ribosomal subunit protein uL13, found in Mesomycoplasma hyopneumoniae (strain 232) (Mycoplasma hyopneumoniae).